A 95-amino-acid chain; its full sequence is Co-chaperonin GroES (95 aa).

The protein belongs to the GroES chaperonin family. In terms of assembly, heptamer of 7 subunits arranged in a ring. Interacts with the chaperonin GroEL.

Its subcellular location is the cytoplasm. Functionally, together with the chaperonin GroEL, plays an essential role in assisting protein folding. The GroEL-GroES system forms a nano-cage that allows encapsulation of the non-native substrate proteins and provides a physical environment optimized to promote and accelerate protein folding. GroES binds to the apical surface of the GroEL ring, thereby capping the opening of the GroEL channel. The protein is Co-chaperonin GroES of Pelobacter propionicus (strain DSM 2379 / NBRC 103807 / OttBd1).